The primary structure comprises 429 residues: Glutamate-1-semialdehyde 2,1-aminomutase 2 (429 aa).

K268 carries the N6-(pyridoxal phosphate)lysine modification.

The protein belongs to the class-III pyridoxal-phosphate-dependent aminotransferase family. HemL subfamily. In terms of assembly, homodimer. The cofactor is pyridoxal 5'-phosphate.

It is found in the cytoplasm. It catalyses the reaction (S)-4-amino-5-oxopentanoate = 5-aminolevulinate. It functions in the pathway porphyrin-containing compound metabolism; protoporphyrin-IX biosynthesis; 5-aminolevulinate from L-glutamyl-tRNA(Glu): step 2/2. The protein is Glutamate-1-semialdehyde 2,1-aminomutase 2 of Staphylococcus aureus (strain MRSA252).